Consider the following 3685-residue polypeptide: Dystrophin (3685 aa).

An actin-binding region spans residues 1–240 (MLWWEEVEDC…YITSLFQVLP (240 aa)). 2 consecutive Calponin-homology (CH) domains span residues 15–119 (DVQK…LHWQ) and 134–240 (TNSE…QVLP). The segment at 63–72 (PKEKGSTRVH) is ANK2- and ANK-3 binding. 24 Spectrin repeats span residues 339-447 (VNLD…NLHR), 448-556 (VLMD…LLQD), 559-667 (LKWQ…QISQ), 719-828 (EIRK…WLEY), 830-934 (NNII…ELQT), 943-1045 (RYQE…KLEE), 1048-1154 (NKLR…ALKG), 1157-1263 (EKTV…TLEE), 1266-1367 (ACWH…LLEQ), 1368-1463 (SIQS…LFQK), 1468-1568 (EQRL…QLEK), 1571-1676 (KLSR…LLLE), 1679-1778 (KHME…KASI), 1779-1874 (PLKE…KALE), 1877-1979 (HQWY…TVRE), 1992-2101 (EISY…RFDR), 2104-2208 (EKWR…RLEE), 2211-2318 (NILS…EIEA), 2319-2423 (QIKD…LRAK), 2475-2577 (FNRA…QLNE), 2580-2686 (KDST…ALEE), 2689-2802 (RLLQ…HLEA), 2808-2930 (KRLH…RKID), and 2935-3040 (RLRE…QLHE). At Asn-340 the chain carries Phosphothreonine. Tyr-344 and Leu-348 each carry phosphoserine. Glu-519, Ser-616, and Ser-629 each carry phosphothreonine. The interval 1415 to 1913 (SDLTSHEISL…PEPRDERKIK (499 aa)) is interaction with SYNM. Residues 3055–3088 (TSVQGPWERAISPNKVPYYINHETQTTCWDHPKM) enclose the WW domain. An interaction with SYNM region spans residues 3058–3408 (QGPWERAISP…TVLEGDNMET (351 aa)). The ZZ-type; degenerate zinc-finger motif lies at 3308-3364 (KHQAKCNICKECPIIGFRYRSLKHFNYDICQSCFFSGRVAKGHKMHYPMVEYCTPTT). Cys-3313, Cys-3316, Cys-3337, and Cys-3340 together coordinate Zn(2+). The tract at residues 3466–3518 (DDEHLLIQHYCQSLNQDSPLSQPRSPAQILISLESEERGELERILADLEEENR) is binds to SNTB1. Residues Ser-3483, Ser-3490, and Ser-3500 each carry the phosphoserine modification. Disordered regions lie at residues 3528 to 3554 (KQQH…QSPR) and 3603 to 3685 (EAKV…EDTM). 2 stretches are compositionally biased toward polar residues: residues 3607-3626 (NGTT…SSQP) and 3662-3673 (QLNNSFPSSRGR). 6 positions are modified to phosphoserine: Ser-3612, Ser-3613, Ser-3617, Ser-3623, Ser-3624, and Ser-3666.

In terms of assembly, interacts with SYNM. Interacts with the syntrophins SNTA1, SNTB1, SNTB2, SNTG1 and SNTG2. Interacts with KRT19. Component of the dystrophin-associated glycoprotein complex which is composed of three subcomplexes: a cytoplasmic complex comprised of DMD (or UTRN), DTNA and a number of syntrophins, such as SNTB1, SNTB2, SNTG1 and SNTG2, the transmembrane dystroglycan complex, and the sarcoglycan-sarcospan complex. Interacts with DAG1 (betaDAG1) with DMD; the interaction is inhibited by phosphorylation on the PPXY motif of DAG1. Interacts with CMYA5. Directly interacts with ANK2 and ANK3; these interactions do not interfere with betaDAG1-binding and are necessary for proper localization in muscle cells. Identified in a dystroglycan complex that contains at least PRX, DRP2, UTRN, DMD and DAG1. Interacts with DTNB. Interacts with PGM5; the interaction is direct. Interacts with NOS1; localizes NOS1 to sarcolemma in muscle cells. As to expression, expressed in muscle fibers accumulating in the costameres of myoplasm at the sarcolemma. Expressed in brain, muscle, kidney, lung and testis. Most tissues contain transcripts of multiple isoforms. Isoform 15: Only isoform to be detected in heart and liver and is also expressed in brain, testis and hepatoma cells.

Its subcellular location is the cell membrane. The protein localises to the sarcolemma. It is found in the cytoplasm. It localises to the cytoskeleton. The protein resides in the postsynaptic cell membrane. In terms of biological role, anchors the extracellular matrix to the cytoskeleton via F-actin. Ligand for dystroglycan. Component of the dystrophin-associated glycoprotein complex which accumulates at the neuromuscular junction (NMJ) and at a variety of synapses in the peripheral and central nervous systems and has a structural function in stabilizing the sarcolemma. Also implicated in signaling events and synaptic transmission. In Homo sapiens (Human), this protein is Dystrophin.